The sequence spans 350 residues: 3-dehydroquinate synthase (350 aa).

NAD(+) is bound by residues 106-110, 130-131, Lys143, and Lys152; these read GVIGD and TS. 3 residues coordinate Zn(2+): Glu185, His246, and His263.

Belongs to the sugar phosphate cyclases superfamily. Dehydroquinate synthase family. The cofactor is Co(2+). Zn(2+) is required as a cofactor. NAD(+) serves as cofactor.

The protein localises to the cytoplasm. The enzyme catalyses 7-phospho-2-dehydro-3-deoxy-D-arabino-heptonate = 3-dehydroquinate + phosphate. It functions in the pathway metabolic intermediate biosynthesis; chorismate biosynthesis; chorismate from D-erythrose 4-phosphate and phosphoenolpyruvate: step 2/7. Catalyzes the conversion of 3-deoxy-D-arabino-heptulosonate 7-phosphate (DAHP) to dehydroquinate (DHQ). The chain is 3-dehydroquinate synthase from Clostridium botulinum (strain Alaska E43 / Type E3).